A 1749-amino-acid polypeptide reads, in one-letter code: Intraflagellar transport protein 172 homolog (1749 aa).

Residue methionine 1 is modified to N-acetylmethionine. A Glycyl lysine isopeptide (Lys-Gly) (interchain with G-Cter in SUMO1) cross-link involves residue lysine 4. WD repeat units lie at residues 14-53, 64-103, 110-148, 150-191, 195-233, 238-278, 284-323, 483-520, and 521-559; these read DGAAKVTCMAWSQNNAKFAVCTVDRVVLLYDEHGERRDKF, RKSYMVKGMAFSPDSTKIAIGQTDNIIYVYKIGEDWGDKK, IQTSAVTCLQWPAEYIIVFGLAEGKVRLANTKTNKSSTI, GTES…ESQG, NHPCPPYALAWATNSIVAAGCDRKIVAYGKEGHMLQTFD, PQER…WEEA, TNLYTITALAWKRDGSRLCVGTLCGGVEQFDCCLRRSIYK, SHESRVDWLELNETGHKLLFRDRKLRLHLYDIESCSKT, and MILNFCSYMQWVPGSDVLVAQNRNSLCVWYNIEAPERVT. One copy of the TPR 1 repeat lies at 593-624; sequence DEGLIEFGTAIDDGNYIRATAFLETLEMTPET. Position 672 is an omega-N-methylarginine (arginine 672). TPR repeat units lie at residues 692-725, 809-842, 854-887, 912-945, 947-970, 971-1004, 1042-1075, 1142-1175, 1276-1309, 1345-1378, 1411-1445, 1447-1477, and 1574-1607; these read EKNYKLAEMIFLEQNAVEEAMGMYQELHRWDECI, GELYERAGDLFEKIHNPQKALECYRKGNAFMKAV, VKLEEAWGDHLVQQKQLDAAINHYIEARCSIKAI, SKYYPLVAQHYASLQEYEIAEELYTKGDRTKDAI, MYTQAGRWEQAHKLAMKCMRPEDV, SVLYITQAQEMEKQGKYREAERLYVTVQEPDLAI, EGRLQEAEYHYLEAQEWKATVNMYRASGLWEEAY, PEVHLKYAMFLEDEGKFEEAEAEFIRAGKPKEAV, VEGFVEQARHWEQAGEYSRAVDCYLKVRDSGNSG, IGKHSAAAELYLNLDLVKEAIDAFIEGEEWNKAK, GVDVIAALDLYVEQGQWDKCIETATKQNYKILHKY, ALYATHLIREGSSAQALALYVQHGAPANPQN, and DKAFYEAGIAAKAVGWDNMAFIFLNRFLDLTDAI.

Belongs to the IFT172 family. Interacts with IFT88. Interacts with IFT57. Interacts with RABL2/RABL2A; binds preferentially to GDP-bound RABL2.

It localises to the cell projection. Its subcellular location is the cilium. Functionally, required for the maintenance and formation of cilia. Plays an indirect role in hedgehog (Hh) signaling, cilia being required for all activity of the hedgehog pathway. In Homo sapiens (Human), this protein is Intraflagellar transport protein 172 homolog (IFT172).